Here is a 264-residue protein sequence, read N- to C-terminus: MLKKSIGIFYRCFYLNNKCDYYLIFLAPFSLFTQIFMVITALISVANSGQMSLIWFTNFDTFTYQSNSLAIFLVWYYFLNHKSRWFENSSLVLSVTGYLVFTVIFFNFYALSRFTGIVNIEPDVQGWFSTITTQLPYSFNGSFINDWNAFSELLLHVIHPLFYFIYVGLLFKTYKFIKPPRNLQSFLLKAGIYPSIYAFYLQTIPFLNVWDNGENSYSVYGFFTQTKYNSYVWIWSIPIFASMFLILWMLFVINNHYYGKKHHK.

The next 6 helical transmembrane spans lie at 23–43, 59–79, 91–111, 150–170, 190–210, and 233–253; these read LIFL…TALI, FDTF…YYFL, LVLS…FYAL, FSEL…VGLL, AGIY…LNVW, and WIWS…LFVI.

The protein resides in the cell membrane. This is an uncharacterized protein from Mycoplasma genitalium (strain ATCC 33530 / DSM 19775 / NCTC 10195 / G37) (Mycoplasmoides genitalium).